The chain runs to 162 residues: uncharacterized protein (162 aa).

The chain crosses the membrane as a helical span at residues 6–24 (SYLISIFYIILITSETTAF).

The protein resides in the membrane. This is an uncharacterized protein from Caenorhabditis elegans.